Consider the following 153-residue polypeptide: Ribosome maturation factor RimP (153 aa).

Belongs to the RimP family.

It is found in the cytoplasm. In terms of biological role, required for maturation of 30S ribosomal subunits. The polypeptide is Ribosome maturation factor RimP (Synechococcus elongatus (strain ATCC 33912 / PCC 7942 / FACHB-805) (Anacystis nidulans R2)).